Here is a 195-residue protein sequence, read N- to C-terminus: Peptidyl-tRNA hydrolase (195 aa).

Residue Y18 coordinates tRNA. H23 acts as the Proton acceptor in catalysis. TRNA contacts are provided by Y69, N71, and N117.

The protein belongs to the PTH family. As to quaternary structure, monomer.

The protein localises to the cytoplasm. It catalyses the reaction an N-acyl-L-alpha-aminoacyl-tRNA + H2O = an N-acyl-L-amino acid + a tRNA + H(+). Functionally, hydrolyzes ribosome-free peptidyl-tRNAs (with 1 or more amino acids incorporated), which drop off the ribosome during protein synthesis, or as a result of ribosome stalling. Catalyzes the release of premature peptidyl moieties from peptidyl-tRNA molecules trapped in stalled 50S ribosomal subunits, and thus maintains levels of free tRNAs and 50S ribosomes. The sequence is that of Peptidyl-tRNA hydrolase from Nitrosomonas europaea (strain ATCC 19718 / CIP 103999 / KCTC 2705 / NBRC 14298).